Consider the following 121-residue polypeptide: Large ribosomal subunit protein uL14 (121 aa).

Belongs to the universal ribosomal protein uL14 family. As to quaternary structure, part of the 50S ribosomal subunit. Forms a cluster with proteins L3 and L19. In the 70S ribosome, L14 and L19 interact and together make contacts with the 16S rRNA in bridges B5 and B8.

Its function is as follows. Binds to 23S rRNA. Forms part of two intersubunit bridges in the 70S ribosome. In Aquifex pyrophilus, this protein is Large ribosomal subunit protein uL14.